The following is a 321-amino-acid chain: D-alanine--D-alanine ligase (321 aa).

In terms of domain architecture, ATP-grasp spans R121 to K315. Residue P147–Q199 coordinates ATP. E268, E282, and N284 together coordinate Mg(2+).

It belongs to the D-alanine--D-alanine ligase family. Mg(2+) is required as a cofactor. The cofactor is Mn(2+).

The protein localises to the cytoplasm. It catalyses the reaction 2 D-alanine + ATP = D-alanyl-D-alanine + ADP + phosphate + H(+). Its pathway is cell wall biogenesis; peptidoglycan biosynthesis. Cell wall formation. In Rickettsia rickettsii (strain Iowa), this protein is D-alanine--D-alanine ligase.